Consider the following 416-residue polypeptide: CCA-adding enzyme (416 aa).

Serine 42 and lysine 45 together coordinate ATP. Serine 42 and lysine 45 together coordinate CTP. Residues aspartate 54, aspartate 56, and aspartate 107 each coordinate Mg(2+). ATP contacts are provided by histidine 130, lysine 150, and tyrosine 159. Residues histidine 130, lysine 150, and tyrosine 159 each coordinate CTP.

This sequence belongs to the tRNA nucleotidyltransferase/poly(A) polymerase family. Archaeal CCA-adding enzyme subfamily. In terms of assembly, homodimer. The cofactor is Mg(2+).

The catalysed reaction is a tRNA precursor + 2 CTP + ATP = a tRNA with a 3' CCA end + 3 diphosphate. It carries out the reaction a tRNA with a 3' CCA end + 2 CTP + ATP = a tRNA with a 3' CCACCA end + 3 diphosphate. In terms of biological role, catalyzes the addition and repair of the essential 3'-terminal CCA sequence in tRNAs without using a nucleic acid template. Adds these three nucleotides in the order of C, C, and A to the tRNA nucleotide-73, using CTP and ATP as substrates and producing inorganic pyrophosphate. tRNA 3'-terminal CCA addition is required both for tRNA processing and repair. Also involved in tRNA surveillance by mediating tandem CCA addition to generate a CCACCA at the 3' terminus of unstable tRNAs. While stable tRNAs receive only 3'-terminal CCA, unstable tRNAs are marked with CCACCA and rapidly degraded. The protein is CCA-adding enzyme of Sulfolobus acidocaldarius (strain ATCC 33909 / DSM 639 / JCM 8929 / NBRC 15157 / NCIMB 11770).